The primary structure comprises 68 residues: UPF0434 protein BMA10229_A1047 (68 aa).

The protein belongs to the UPF0434 family.

The protein is UPF0434 protein BMA10229_A1047 of Burkholderia mallei (strain NCTC 10229).